The chain runs to 509 residues: ATP synthase subunit alpha (509 aa).

An ATP-binding site is contributed by 169–176; the sequence is GDRQTGKT.

Belongs to the ATPase alpha/beta chains family. As to quaternary structure, F-type ATPases have 2 components, CF(1) - the catalytic core - and CF(0) - the membrane proton channel. CF(1) has five subunits: alpha(3), beta(3), gamma(1), delta(1), epsilon(1). CF(0) has three main subunits: a(1), b(2) and c(9-12). The alpha and beta chains form an alternating ring which encloses part of the gamma chain. CF(1) is attached to CF(0) by a central stalk formed by the gamma and epsilon chains, while a peripheral stalk is formed by the delta and b chains.

It is found in the cell inner membrane. It catalyses the reaction ATP + H2O + 4 H(+)(in) = ADP + phosphate + 5 H(+)(out). Its function is as follows. Produces ATP from ADP in the presence of a proton gradient across the membrane. The alpha chain is a regulatory subunit. The polypeptide is ATP synthase subunit alpha (Zymomonas mobilis subsp. mobilis (strain ATCC 31821 / ZM4 / CP4)).